The chain runs to 284 residues: WUSCHEL-related homeobox 10 (284 aa).

The interval 1-43 (MDRTATASWEVMSRRGEQQQQLMMQAPASHNGGSGGGEPARSR) is disordered. Positions 39 to 103 (PARSRWAPKP…NRRSRSRRRA (65 aa)) form a DNA-binding region, homeobox; WUS-type.

Belongs to the WUS homeobox family.

It localises to the nucleus. Its function is as follows. Transcription factor which may be involved in developmental processes. The chain is WUSCHEL-related homeobox 10 (WOX10) from Oryza sativa subsp. japonica (Rice).